Reading from the N-terminus, the 481-residue chain is tRNA sulfurtransferase (481 aa).

The region spanning 54–156 (ADGDGPLRHI…GKDVFFYHEI (103 aa)) is the THUMP domain. ATP-binding positions include 174–175 (LV), Lys-256, Gly-278, and Gln-287. A disulfide bond links Cys-334 and Cys-433. Residues 388-463 (IPKDAVIIDL…YYSTFSDLKK (76 aa)) form the Rhodanese domain. The active-site Cysteine persulfide intermediate is the Cys-433.

This sequence belongs to the ThiI family.

The protein resides in the cytoplasm. It carries out the reaction [ThiI sulfur-carrier protein]-S-sulfanyl-L-cysteine + a uridine in tRNA + 2 reduced [2Fe-2S]-[ferredoxin] + ATP + H(+) = [ThiI sulfur-carrier protein]-L-cysteine + a 4-thiouridine in tRNA + 2 oxidized [2Fe-2S]-[ferredoxin] + AMP + diphosphate. The enzyme catalyses [ThiS sulfur-carrier protein]-C-terminal Gly-Gly-AMP + S-sulfanyl-L-cysteinyl-[cysteine desulfurase] + AH2 = [ThiS sulfur-carrier protein]-C-terminal-Gly-aminoethanethioate + L-cysteinyl-[cysteine desulfurase] + A + AMP + 2 H(+). It functions in the pathway cofactor biosynthesis; thiamine diphosphate biosynthesis. Catalyzes the ATP-dependent transfer of a sulfur to tRNA to produce 4-thiouridine in position 8 of tRNAs, which functions as a near-UV photosensor. Also catalyzes the transfer of sulfur to the sulfur carrier protein ThiS, forming ThiS-thiocarboxylate. This is a step in the synthesis of thiazole, in the thiamine biosynthesis pathway. The sulfur is donated as persulfide by IscS. The polypeptide is tRNA sulfurtransferase (Thermoplasma acidophilum (strain ATCC 25905 / DSM 1728 / JCM 9062 / NBRC 15155 / AMRC-C165)).